The chain runs to 88 residues: Toxin RelE3 (88 aa).

The protein belongs to the RelE toxin family. Forms heterodimers with RelB3 and possibly a heterotetramer RelE3-RelB3(2)-RelE3 from 2 heterodimers. The heterotetramer is probably not very stable in solution.

In terms of biological role, toxic component of a type II toxin-antitoxin (TA) system. Has RNase activity. Is very toxic upon expression in E.coli. Its toxic activity is probably neutralized by the cognate antitoxin RelB3. The sequence is that of Toxin RelE3 (relE3) from Methanocaldococcus jannaschii (strain ATCC 43067 / DSM 2661 / JAL-1 / JCM 10045 / NBRC 100440) (Methanococcus jannaschii).